Here is a 420-residue protein sequence, read N- to C-terminus: MRYDVVIIGGGLAGLTCGIRLAEQGKRCAIVSAGQNALHFSSGALDLLSHLPDGQPVSQPLDALDELARQAPHHPYSRMGAAAVAALLPQVEALLERSNISLLGNHQQNHWRMTPLGKFRACWLSPADGVTRGLADSHFGDNPLIAGIEGFLDFQSRIVAGTLQTQGIAARSDELKLPVLDRLRQNPSEFRAVNIARLLDRPENRSALVEELSLLANGNDAIIMPACLGLDSPEIVSELADALGKPVLLLPTLPPSVLGLRLHQALSQRFRQLGGMVMPGDRAVRASLSSQEIAVHSHHHRDIPLRAKHAVLASGSFFSNGLVTQFDRVTEPVFGLDVRFAEQREGWSQQDVFAPQPYMQFGAIVDEHLHPRIAGETVNNLYAIGAVLEGFDPIVQGCGAGVSLLSALHVAEQILKEGNP.

It belongs to the anaerobic G-3-P dehydrogenase subunit B family. Composed of a catalytic GlpA/B dimer and of membrane bound GlpC. FMN serves as cofactor.

The enzyme catalyses a quinone + sn-glycerol 3-phosphate = dihydroxyacetone phosphate + a quinol. Its pathway is polyol metabolism; glycerol degradation via glycerol kinase pathway; glycerone phosphate from sn-glycerol 3-phosphate (anaerobic route): step 1/1. Functionally, conversion of glycerol 3-phosphate to dihydroxyacetone. Uses fumarate or nitrate as electron acceptor. The protein is Anaerobic glycerol-3-phosphate dehydrogenase subunit B of Pectobacterium atrosepticum (strain SCRI 1043 / ATCC BAA-672) (Erwinia carotovora subsp. atroseptica).